The following is a 305-amino-acid chain: Probable alpha-L-glutamate ligase (305 aa).

The region spanning 119-301 is the ATP-grasp domain; it reads LQVLAAQHIP…IAGLIIDYLL (183 aa). Residues lysine 155, 192 to 193, aspartate 201, and 225 to 227 each bind ATP; these read DF and RAN. Positions 262, 274, and 276 each coordinate Mg(2+). Mn(2+)-binding residues include aspartate 262, glutamate 274, and asparagine 276.

The protein belongs to the RimK family. Requires Mg(2+) as cofactor. The cofactor is Mn(2+).

This Haemophilus ducreyi (strain 35000HP / ATCC 700724) protein is Probable alpha-L-glutamate ligase.